A 442-amino-acid polypeptide reads, in one-letter code: tRNA modification GTPase MnmE (442 aa).

Positions 23, 82, and 121 each coordinate (6S)-5-formyl-5,6,7,8-tetrahydrofolate. One can recognise a TrmE-type G domain in the interval 215-364; that stretch reads GTSLILAGKP…VKQALIQWMQ (150 aa). Asn-225 is a K(+) binding site. Residues 225–230, 244–250, 269–272, and 325–328 contribute to the GTP site; these read NVGKSS, THIPGTT, DTAG, and NKAD. Ser-229 provides a ligand contact to Mg(2+). K(+) is bound by residues Thr-244, Ile-246, and Thr-249. Thr-250 provides a ligand contact to Mg(2+). Residue Lys-442 coordinates (6S)-5-formyl-5,6,7,8-tetrahydrofolate.

This sequence belongs to the TRAFAC class TrmE-Era-EngA-EngB-Septin-like GTPase superfamily. TrmE GTPase family. Homodimer. Heterotetramer of two MnmE and two MnmG subunits. K(+) is required as a cofactor.

The protein resides in the cytoplasm. Exhibits a very high intrinsic GTPase hydrolysis rate. Involved in the addition of a carboxymethylaminomethyl (cmnm) group at the wobble position (U34) of certain tRNAs, forming tRNA-cmnm(5)s(2)U34. This chain is tRNA modification GTPase MnmE, found in Chlamydia pneumoniae (Chlamydophila pneumoniae).